Consider the following 305-residue polypeptide: uncharacterized protein (305 aa).

A helical membrane pass occupies residues Ile8–Phe28.

The protein localises to the membrane. This is an uncharacterized protein from Bacillus subtilis (strain 168).